A 561-amino-acid chain; its full sequence is Arginine--tRNA ligase (561 aa).

Residues 129-139 (ANPTGPLHVGH) carry the 'HIGH' region motif.

It belongs to the class-I aminoacyl-tRNA synthetase family. Monomer.

It is found in the cytoplasm. The enzyme catalyses tRNA(Arg) + L-arginine + ATP = L-arginyl-tRNA(Arg) + AMP + diphosphate. The sequence is that of Arginine--tRNA ligase from Polaromonas sp. (strain JS666 / ATCC BAA-500).